We begin with the raw amino-acid sequence, 148 residues long: 3-dehydroquinate dehydratase (148 aa).

Tyr24 acts as the Proton acceptor in catalysis. The substrate site is built by Asn75, His81, and Asp88. The Proton donor role is filled by His101. Residues Leu102–Ser103 and Arg112 each bind substrate.

It belongs to the type-II 3-dehydroquinase family. As to quaternary structure, homododecamer.

It carries out the reaction 3-dehydroquinate = 3-dehydroshikimate + H2O. It participates in metabolic intermediate biosynthesis; chorismate biosynthesis; chorismate from D-erythrose 4-phosphate and phosphoenolpyruvate: step 3/7. In terms of biological role, catalyzes a trans-dehydration via an enolate intermediate. The protein is 3-dehydroquinate dehydratase of Bartonella henselae (strain ATCC 49882 / DSM 28221 / CCUG 30454 / Houston 1) (Rochalimaea henselae).